The sequence spans 419 residues: 26S proteasome regulatory subunit 8 homolog B (419 aa).

202-209 (GPPGTGKT) provides a ligand contact to ATP. Lys-406 is covalently cross-linked (Glycyl lysine isopeptide (Lys-Gly) (interchain with G-Cter in ubiquitin)).

Belongs to the AAA ATPase family. As to quaternary structure, component of the 19S regulatory particle (RP/PA700) base subcomplex of the 26S proteasome. The 26S proteasome is composed of a core protease (CP), known as the 20S proteasome, capped at one or both ends by the 19S regulatory particle (RP/PA700). The RP/PA700 complex is composed of at least 17 different subunits in two subcomplexes, the base and the lid, which form the portions proximal and distal to the 20S proteolytic core, respectively.

It localises to the cytoplasm. The protein localises to the nucleus. The 26S proteasome is involved in the ATP-dependent degradation of ubiquitinated proteins. The regulatory (or ATPase) complex confers ATP dependency and substrate specificity to the 26S complex. The protein is 26S proteasome regulatory subunit 8 homolog B (RPT6B) of Arabidopsis thaliana (Mouse-ear cress).